We begin with the raw amino-acid sequence, 254 residues long: Peptide methionine sulfoxide reductase A5 (254 aa).

Positions 1–26 are cleaved as a signal peptide; that stretch reads MARGSAAAAIAGVVWVLLLLVGVASG.

It belongs to the MsrA Met sulfoxide reductase family.

It carries out the reaction L-methionyl-[protein] + [thioredoxin]-disulfide + H2O = L-methionyl-(S)-S-oxide-[protein] + [thioredoxin]-dithiol. It catalyses the reaction [thioredoxin]-disulfide + L-methionine + H2O = L-methionine (S)-S-oxide + [thioredoxin]-dithiol. Its function is as follows. Catalyzes the reduction of methionine sulfoxide (MetSO) to methionine in proteins. Plays a protective role against oxidative stress by restoring activity to proteins that have been inactivated by methionine oxidation. MSRA family specifically reduces the MetSO S-enantiomer. This Oryza sativa subsp. japonica (Rice) protein is Peptide methionine sulfoxide reductase A5 (MSRA5).